A 455-amino-acid chain; its full sequence is MTHSQDLFDRARDVIPGGVNSPVRAFGSVGGTPRMMVRAAGPYVTDADGVEYVDLVNSWGPAILGHARPEVVKAVQDAAALGLGFGATTPAETELAELVTERVRVAGVDGSPDRRPVEKLRLVSTGTEATMTAIRLARGFTGRDLLVKFAGHYHGHSDSLLAEAGSGVATLALPGSAGIPEAIAAQTIVVPYNDLGAVRAVFAEHGPRIAAVITEAAAANMGVVPPLPGFTAELARIAHDNGSLLISDEVLTGFRVHPAGYWGLDNDGLAADHPDAWTPDLVTYGKVIGGGLPVAALGGRADVMDHLAPLGPVYQAGTLSGNPVAVAAGLTTLRLADADVYRALDIAADILIYAVELAFDRAGLAYSVQRAGSLFSFTFGTPPEHGITDYATVQAQETWRYPAFFHSMLDQGVSLPPSVFEAWFVSAAMDEASLDRVIRALPAAARAAAAATPPA.

N6-(pyridoxal phosphate)lysine is present on K286.

It belongs to the class-III pyridoxal-phosphate-dependent aminotransferase family. HemL subfamily. In terms of assembly, homodimer. The cofactor is pyridoxal 5'-phosphate.

Its subcellular location is the cytoplasm. It catalyses the reaction (S)-4-amino-5-oxopentanoate = 5-aminolevulinate. It functions in the pathway porphyrin-containing compound metabolism; protoporphyrin-IX biosynthesis; 5-aminolevulinate from L-glutamyl-tRNA(Glu): step 2/2. This Clavibacter sepedonicus (Clavibacter michiganensis subsp. sepedonicus) protein is Glutamate-1-semialdehyde 2,1-aminomutase.